The chain runs to 455 residues: Gamma-glutamyl phosphate reductase (455 aa).

This sequence belongs to the gamma-glutamyl phosphate reductase family.

It is found in the cytoplasm. It catalyses the reaction L-glutamate 5-semialdehyde + phosphate + NADP(+) = L-glutamyl 5-phosphate + NADPH + H(+). Its pathway is amino-acid biosynthesis; L-proline biosynthesis; L-glutamate 5-semialdehyde from L-glutamate: step 2/2. In terms of biological role, catalyzes the NADPH-dependent reduction of L-glutamate 5-phosphate into L-glutamate 5-semialdehyde and phosphate. The product spontaneously undergoes cyclization to form 1-pyrroline-5-carboxylate. This is Gamma-glutamyl phosphate reductase from Synechococcus sp. (strain JA-3-3Ab) (Cyanobacteria bacterium Yellowstone A-Prime).